The following is an 82-amino-acid chain: Probable acyl carrier protein IacP (82 aa).

One can recognise a Carrier domain in the interval 3-78 (MDIEARVKKV…DICRVVKKSL (76 aa)). The residue at position 38 (S38) is an O-(pantetheine 4'-phosphoryl)serine.

In terms of processing, 4'-phosphopantetheine is transferred from CoA to a specific serine of apo-IacP.

Its subcellular location is the cytoplasm. Its function is as follows. Acyl carrier protein. The polypeptide is Probable acyl carrier protein IacP (iacP) (Salmonella typhimurium (strain SL1344)).